The sequence spans 656 residues: Choline transporter-like protein 3 (656 aa).

The chain crosses the membrane as a helical span at residues 37 to 57; sequence WLVLFFLFWTGLVFIMGYSVV. N-linked (GlcNAc...) asparagine glycans are attached at residues N141 and N154. 5 helical membrane-spanning segments follow: residues 216–236, 242–262, 288–308, 337–357, and 381–401; these read DTILGLCVFTFALSLAMLFAF, LLIHIIISLVILGLLFVCGVL, LAFAIISTVVTVLLLALIFTL, LWTCAILIFFWVLWVAVLLSL, and YMWWYHLIGLIWTSEFILACQ. N-linked (GlcNAc...) asparagine glycosylation is found at N506 and N524. The chain crosses the membrane as a helical span at residues 537 to 557; that stretch reads FVIFLGKVLVVCFSIFGGLMA. N-linked (GlcNAc...) asparagine glycosylation is present at N559. A helical membrane pass occupies residues 566–586; it reads VWAIPLLLVAFFACVVAHSFL. The interval 634–656 is disordered; it reads AKSQGQKDALPNEEGTELQPIVR.

This sequence belongs to the CTL (choline transporter-like) family.

Its subcellular location is the membrane. The protein is Choline transporter-like protein 3 (Slc44a3) of Mus musculus (Mouse).